We begin with the raw amino-acid sequence, 452 residues long: Probable 1,4-beta-D-glucan cellobiohydrolase A (452 aa).

The signal sequence occupies residues 1–17 (MHQRALLFSALAVAANA). An N-linked (GlcNAc...) asparagine glycan is attached at Asn-81. Glu-226 functions as the Nucleophile in the catalytic mechanism. Residue Glu-231 is the Proton donor of the active site. Asn-284 is a glycosylation site (N-linked (GlcNAc...) asparagine). Residues 406 to 432 (DPSKPGVARGTCEHGAGDPEKVESQHP) are disordered. Basic and acidic residues predominate over residues 416–431 (TCEHGAGDPEKVESQH).

Belongs to the glycosyl hydrolase 7 (cellulase C) family.

It is found in the secreted. The catalysed reaction is Hydrolysis of (1-&gt;4)-beta-D-glucosidic linkages in cellulose and cellotetraose, releasing cellobiose from the non-reducing ends of the chains.. Functionally, the biological conversion of cellulose to glucose generally requires three types of hydrolytic enzymes: (1) Endoglucanases which cut internal beta-1,4-glucosidic bonds; (2) Exocellobiohydrolases that cut the disaccharide cellobiose from the non-reducing end of the cellulose polymer chain; (3) Beta-1,4-glucosidases which hydrolyze the cellobiose and other short cello-oligosaccharides to glucose. The polypeptide is Probable 1,4-beta-D-glucan cellobiohydrolase A (cbhA) (Neosartorya fischeri (strain ATCC 1020 / DSM 3700 / CBS 544.65 / FGSC A1164 / JCM 1740 / NRRL 181 / WB 181) (Aspergillus fischerianus)).